A 385-amino-acid chain; its full sequence is 4-hydroxy-3-methylbut-2-en-1-yl diphosphate synthase (flavodoxin) (385 aa).

4 residues coordinate [4Fe-4S] cluster: Cys-282, Cys-285, Cys-317, and Glu-324.

This sequence belongs to the IspG family. It depends on [4Fe-4S] cluster as a cofactor.

The enzyme catalyses (2E)-4-hydroxy-3-methylbut-2-enyl diphosphate + oxidized [flavodoxin] + H2O + 2 H(+) = 2-C-methyl-D-erythritol 2,4-cyclic diphosphate + reduced [flavodoxin]. It participates in isoprenoid biosynthesis; isopentenyl diphosphate biosynthesis via DXP pathway; isopentenyl diphosphate from 1-deoxy-D-xylulose 5-phosphate: step 5/6. Its function is as follows. Converts 2C-methyl-D-erythritol 2,4-cyclodiphosphate (ME-2,4cPP) into 1-hydroxy-2-methyl-2-(E)-butenyl 4-diphosphate. This chain is 4-hydroxy-3-methylbut-2-en-1-yl diphosphate synthase (flavodoxin), found in Nocardia farcinica (strain IFM 10152).